The following is a 114-amino-acid chain: uncharacterized protein (114 aa).

The disordered stretch occupies residues 90-114 (VESSQKRKPEESTIGMDAPKKMKRG).

This is an uncharacterized protein from Caenorhabditis elegans.